The following is an 826-amino-acid chain: E3 ubiquitin-protein ligase SH3RF1 (826 aa).

The segment at 12–53 (CPVCLERLDASAKVLPCQHTFCKRCLLGIVSSRKELRCPECR) adopts an RING-type zinc-finger fold. Residues 80–130 (PRKAGDGGSAGNSTNALRAQGSVTTNGGLNDAQNTQSGQQRIQARSPPVRG) form a disordered region. The span at 90-122 (GNSTNALRAQGSVTTNGGLNDAQNTQSGQQRIQ) shows a compositional bias: polar residues. 2 consecutive SH3 domains span residues 132-191 (PQLP…IIKP) and 194-257 (QPPP…FNSA). Residues 266-319 (KPSGADTGEGSSGTSHSGNSQKQADAKKNTKKRHSFTSLTMSNKSSQSVQNRHS) are disordered. Over residues 273 to 285 (GEGSSGTSHSGNS) the composition is skewed to low complexity. Polar residues predominate over residues 301 to 317 (FTSLTMSNKSSQSVQNR). Positions 398-459 (ARPSVFIAIY…PGNYVAPVTR (62 aa)) constitute an SH3 3 domain. 2 disordered regions span residues 647-694 (NSAA…QTNS) and 725-759 (DSVS…CSSL). Residues 652–663 (KQDKDSKKEKKG) show a composition bias toward basic and acidic residues. The 60-residue stretch at 767-826 (RPCERYRVMVSYPPQSEAELELKEGDIVFVHKKREDGWFKGTLQRNGKTGLFPGSFVENI) folds into the SH3 4 domain.

The protein belongs to the SH3RF family. Post-translationally, autoubiquitinated. Ubiquitinated by SH3RF2, leading to proteasome-mediated degradation.

The protein localises to the cytoplasm. It localises to the perinuclear region. The protein resides in the cell projection. It is found in the lamellipodium. Its subcellular location is the golgi apparatus. The protein localises to the trans-Golgi network. It carries out the reaction S-ubiquitinyl-[E2 ubiquitin-conjugating enzyme]-L-cysteine + [acceptor protein]-L-lysine = [E2 ubiquitin-conjugating enzyme]-L-cysteine + N(6)-ubiquitinyl-[acceptor protein]-L-lysine.. It participates in protein modification; protein ubiquitination. In terms of biological role, has E3 ubiquitin-protein ligase activity. In the absence of an external substrate, it can catalyze self-ubiquitination. Acts as a scaffold protein that contributes to the effective activation of the JNK signaling pathway. Plays an essential role in the anterior neural development. This is E3 ubiquitin-protein ligase SH3RF1 (sh3rf1) from Xenopus laevis (African clawed frog).